A 206-amino-acid polypeptide reads, in one-letter code: Protein GrpE (206 aa).

The segment covering Met1 to Asp10 has biased composition (basic and acidic residues). The segment at Met1–Glu38 is disordered.

This sequence belongs to the GrpE family. Homodimer.

It is found in the cytoplasm. Participates actively in the response to hyperosmotic and heat shock by preventing the aggregation of stress-denatured proteins, in association with DnaK and GrpE. It is the nucleotide exchange factor for DnaK and may function as a thermosensor. Unfolded proteins bind initially to DnaJ; upon interaction with the DnaJ-bound protein, DnaK hydrolyzes its bound ATP, resulting in the formation of a stable complex. GrpE releases ADP from DnaK; ATP binding to DnaK triggers the release of the substrate protein, thus completing the reaction cycle. Several rounds of ATP-dependent interactions between DnaJ, DnaK and GrpE are required for fully efficient folding. The protein is Protein GrpE of Bradyrhizobium sp. (strain ORS 278).